Here is a 1120-residue protein sequence, read N- to C-terminus: TBC1 domain family member 8B (1120 aa).

GRAM domains follow at residues L145–S212 and E285–N353. A Rab-GAP TBC domain is found at G487 to G674. Residues N858 to G893 enclose the EF-hand domain. The disordered stretch occupies residues S1035 to P1066. A compositionally biased stretch (basic and acidic residues) spans S1054–P1066.

In terms of assembly, interacts (via domain Rab-GAP TBC) with RAB11B (in GTP-bound form). As to expression, kidney (at protein level).

It localises to the cytoplasm. It is found in the cytosol. Functionally, involved in vesicular recycling, probably as a RAB11B GTPase-activating protein. This Homo sapiens (Human) protein is TBC1 domain family member 8B (TBC1D8B).